A 139-amino-acid chain; its full sequence is D-ribose pyranase (139 aa).

The active-site Proton donor is the H20. Substrate contacts are provided by residues D28, H106, and 128 to 130; that span reads YAN.

This sequence belongs to the RbsD / FucU family. RbsD subfamily. Homodecamer.

It is found in the cytoplasm. The catalysed reaction is beta-D-ribopyranose = beta-D-ribofuranose. It functions in the pathway carbohydrate metabolism; D-ribose degradation; D-ribose 5-phosphate from beta-D-ribopyranose: step 1/2. Catalyzes the interconversion of beta-pyran and beta-furan forms of D-ribose. The polypeptide is D-ribose pyranase (Vibrio campbellii (strain ATCC BAA-1116)).